The sequence spans 87 residues: Translation initiation factor IF-1 2 (87 aa).

The S1-like domain occupies 1–72 (MAKEELLELD…TKGRINFRHK (72 aa)).

Belongs to the IF-1 family. In terms of assembly, component of the 30S ribosomal translation pre-initiation complex which assembles on the 30S ribosome in the order IF-2 and IF-3, IF-1 and N-formylmethionyl-tRNA(fMet); mRNA recruitment can occur at any time during PIC assembly.

It is found in the cytoplasm. Its function is as follows. One of the essential components for the initiation of protein synthesis. Stabilizes the binding of IF-2 and IF-3 on the 30S subunit to which N-formylmethionyl-tRNA(fMet) subsequently binds. Helps modulate mRNA selection, yielding the 30S pre-initiation complex (PIC). Upon addition of the 50S ribosomal subunit IF-1, IF-2 and IF-3 are released leaving the mature 70S translation initiation complex. This chain is Translation initiation factor IF-1 2, found in Burkholderia vietnamiensis (strain G4 / LMG 22486) (Burkholderia cepacia (strain R1808)).